Here is a 423-residue protein sequence, read N- to C-terminus: Divalent metal cation transporter MntH (423 aa).

11 helical membrane passes run 31 to 51, 58 to 78, 116 to 136, 137 to 157, 168 to 188, 213 to 233, 254 to 274, 302 to 322, 342 to 362, 363 to 383, and 401 to 421; these read LMML…GNFA, SSFG…AMLI, IIAI…FQLV, FGIS…MILI, VVIG…LFFA, AAGI…SALF, IAMV…AAVF, VLFG…GTMA, FITM…TDIL, VMSQ…LLIF, and YAGV…MVTL.

The protein belongs to the NRAMP family.

The protein resides in the cell inner membrane. Its function is as follows. H(+)-stimulated, divalent metal cation uptake system. This Vibrio campbellii (strain ATCC BAA-1116) protein is Divalent metal cation transporter MntH.